A 522-amino-acid polypeptide reads, in one-letter code: Glucans biosynthesis protein G (522 aa).

The first 33 residues, 1 to 33 (MLDNKFGFKQRVASLRWLSAAIMLSVSAVPAWA), serve as a signal peptide directing secretion.

This sequence belongs to the OpgD/OpgG family.

The protein resides in the periplasm. The protein operates within glycan metabolism; osmoregulated periplasmic glucan (OPG) biosynthesis. In terms of biological role, involved in the biosynthesis of osmoregulated periplasmic glucans (OPGs). The protein is Glucans biosynthesis protein G of Pectobacterium carotovorum subsp. carotovorum (strain PC1).